The primary structure comprises 268 residues: Early nodulin-20 (268 aa).

The N-terminal stretch at 1-24 is a signal peptide; that stretch reads MSSSSPILLMFIFSIWMLISYSES. The Phytocyanin domain maps to 25 to 129; it reads TDYLVGDSEN…GLKLAVVVMV (105 aa). N67 carries an N-linked (GlcNAc...) asparagine glycan. C83 and C117 are oxidised to a cystine. Pro residues-rich tracts occupy residues 134-145 and 160-185; these read SSPPPPPSPPTP and PSPP…TPIP. The segment at 134–253 is disordered; it reads SSPPPPPSPP…SGSKGGGAGH (120 aa). The span at 199 to 235 shows a compositional bias: low complexity; sequence PSLSKSPSPSESPSLAPSPSDSVASLAPSSSPSDESP. A lipid anchor (GPI-anchor amidated serine) is attached at S243. Residues 244 to 268 constitute a propeptide, removed in mature form; that stretch reads SGSKGGGAGHGFLEVSIAMMMFLIF.

It belongs to the early nodulin-like (ENODL) family.

The protein resides in the cell membrane. In terms of biological role, may act as a carbohydrate transporter. This Medicago truncatula (Barrel medic) protein is Early nodulin-20.